We begin with the raw amino-acid sequence, 67 residues long: Disintegrin EC3A (67 aa).

A Disintegrin domain is found at 1 to 65 (NSVHPCCDPV…DCPRNRYKGK (65 aa)). Disulfide bonds link Cys6/Cys29, Cys20/Cys26, Cys25/Cys50, and Cys38/Cys57. The short motif at 42 to 44 (VGD) is the Cell attachment site; atypical (VGD) element.

The protein belongs to the venom metalloproteinase (M12B) family. P-II subfamily. P-IIe sub-subfamily. As to quaternary structure, heterodimer with EC3B; disulfide-linked. In terms of tissue distribution, expressed by the venom gland.

The protein localises to the secreted. Inhibits adhesion of cells expressing alpha-4/beta-1 (ITGA4/ITGB1) and alpha-4/beta-7 (ITGA4/ITGB7) integrins to the natural ligands vascular cell adhesion molecule 1 (VCAM-1) and mucosal addressin cell adhesion molecule 1 (MADCAM-1). It is also a weaker inhibitor of alpha-5/beta-1 (ITGA5/ITGB1) and alpha-2b/beta-3 (ITGA2B/ITGB3) integrins. The inhibitory activity of EC3 towards alpha-4 integrins is associated with the MLD sequence of EC3B subunit. The ability of EC3 to inhibit ITGA5/ITGB1 resides in both subunits A and B. This Echis carinatus (Saw-scaled viper) protein is Disintegrin EC3A.